Reading from the N-terminus, the 396-residue chain is Inhibitory POU protein (396 aa).

Positions 86 to 95 (RAEALAAVDI) match the POU-IV box motif. The POU-specific domain maps to 222-299 (DTDTDPRELE…ILQAWLEEAE (78 aa)). A disordered region spans residues 302–328 (AKNKRRDPDAPSVLPAGEKKRKRTSIA). The segment at residues 320 to 377 (KKRKRTSIAAPEKRSLEAYFAVQPRPSGEKIAAIAEKLDLKKNVVRVWFCNQRQKQKR) is a DNA-binding region (homeobox; atypical).

The protein belongs to the POU transcription factor family. Class-4 subfamily. In terms of tissue distribution, coexpressed with vvl in overlapping subsets of neurons in the embryonic central nervous system. Expressed in olfactory neurons.

The protein resides in the nucleus. In terms of biological role, modulates gene transcription; simultaneously generates both a specific activator and an inhibitor of gene transcription, capable of modulating two distinct regulatory programs during neural development. Has a role in olfactory behavior. The polypeptide is Inhibitory POU protein (acj6) (Drosophila melanogaster (Fruit fly)).